We begin with the raw amino-acid sequence, 99 residues long: Large ribosomal subunit protein uL23 (99 aa).

This sequence belongs to the universal ribosomal protein uL23 family. Part of the 50S ribosomal subunit. Contacts protein L29, and trigger factor when it is bound to the ribosome.

Its function is as follows. One of the early assembly proteins it binds 23S rRNA. One of the proteins that surrounds the polypeptide exit tunnel on the outside of the ribosome. Forms the main docking site for trigger factor binding to the ribosome. This chain is Large ribosomal subunit protein uL23, found in Agathobacter rectalis (strain ATCC 33656 / DSM 3377 / JCM 17463 / KCTC 5835 / VPI 0990) (Eubacterium rectale).